The chain runs to 76 residues: Spore germination protein-like protein YdzR (76 aa).

The protein belongs to the GerPA/GerPF family.

The polypeptide is Spore germination protein-like protein YdzR (ydzR) (Bacillus subtilis (strain 168)).